The sequence spans 35 residues: uncharacterized protein (35 aa).

A compositionally biased stretch (low complexity) spans 1 to 27; that stretch reads MDQNEANIYNENNENNENNENENCQNE. The disordered stretch occupies residues 1-35; that stretch reads MDQNEANIYNENNENNENNENENCQNEPIRIKIII.

This is an uncharacterized protein from Dictyostelium discoideum (Social amoeba).